The sequence spans 366 residues: Aminomethyltransferase (366 aa).

It belongs to the GcvT family. In terms of assembly, the glycine cleavage system is composed of four proteins: P, T, L and H.

It catalyses the reaction N(6)-[(R)-S(8)-aminomethyldihydrolipoyl]-L-lysyl-[protein] + (6S)-5,6,7,8-tetrahydrofolate = N(6)-[(R)-dihydrolipoyl]-L-lysyl-[protein] + (6R)-5,10-methylene-5,6,7,8-tetrahydrofolate + NH4(+). Functionally, the glycine cleavage system catalyzes the degradation of glycine. This is Aminomethyltransferase from Moorella thermoacetica (strain ATCC 39073 / JCM 9320).